We begin with the raw amino-acid sequence, 398 residues long: 1-deoxy-D-xylulose 5-phosphate reductoisomerase (398 aa).

NADPH-binding residues include Thr10, Gly11, Ser12, Ile13, Gly36, Arg37, Asn38, and Asn124. Position 125 (Lys125) interacts with 1-deoxy-D-xylulose 5-phosphate. Glu126 contacts NADPH. Asp150 serves as a coordination point for Mn(2+). 1-deoxy-D-xylulose 5-phosphate contacts are provided by Ser151, Glu152, Ser186, and His209. Glu152 is a binding site for Mn(2+). Gly215 contributes to the NADPH binding site. Ser222, Asn227, Lys228, and Glu231 together coordinate 1-deoxy-D-xylulose 5-phosphate. Residue Glu231 coordinates Mn(2+).

This sequence belongs to the DXR family. In terms of assembly, homodimer. Mg(2+) is required as a cofactor. Requires Mn(2+) as cofactor.

The catalysed reaction is 2-C-methyl-D-erythritol 4-phosphate + NADP(+) = 1-deoxy-D-xylulose 5-phosphate + NADPH + H(+). It functions in the pathway isoprenoid biosynthesis; isopentenyl diphosphate biosynthesis via DXP pathway; isopentenyl diphosphate from 1-deoxy-D-xylulose 5-phosphate: step 1/6. Its function is as follows. Catalyzes the NADPH-dependent rearrangement and reduction of 1-deoxy-D-xylulose-5-phosphate (DXP) to 2-C-methyl-D-erythritol 4-phosphate (MEP). The sequence is that of 1-deoxy-D-xylulose 5-phosphate reductoisomerase from Yersinia enterocolitica serotype O:8 / biotype 1B (strain NCTC 13174 / 8081).